Here is a 199-residue protein sequence, read N- to C-terminus: Fe/S biogenesis protein NfuA (199 aa).

The [4Fe-4S] cluster site is built by cysteine 151 and cysteine 154.

It belongs to the NfuA family. As to quaternary structure, homodimer. [4Fe-4S] cluster serves as cofactor.

Functionally, involved in iron-sulfur cluster biogenesis. Binds a 4Fe-4S cluster, can transfer this cluster to apoproteins, and thereby intervenes in the maturation of Fe/S proteins. Could also act as a scaffold/chaperone for damaged Fe/S proteins. The chain is Fe/S biogenesis protein NfuA from Xanthomonas oryzae pv. oryzae (strain PXO99A).